A 469-amino-acid polypeptide reads, in one-letter code: 3-isopropylmalate dehydratase large subunit (469 aa).

Residues Cys350, Cys410, and Cys413 each coordinate [4Fe-4S] cluster.

Belongs to the aconitase/IPM isomerase family. LeuC type 1 subfamily. As to quaternary structure, heterodimer of LeuC and LeuD. Requires [4Fe-4S] cluster as cofactor.

It catalyses the reaction (2R,3S)-3-isopropylmalate = (2S)-2-isopropylmalate. The protein operates within amino-acid biosynthesis; L-leucine biosynthesis; L-leucine from 3-methyl-2-oxobutanoate: step 2/4. In terms of biological role, catalyzes the isomerization between 2-isopropylmalate and 3-isopropylmalate, via the formation of 2-isopropylmaleate. In Sinorhizobium fredii (strain NBRC 101917 / NGR234), this protein is 3-isopropylmalate dehydratase large subunit.